Consider the following 97-residue polypeptide: Large ribosomal subunit protein eL21 (97 aa).

The protein belongs to the eukaryotic ribosomal protein eL21 family.

The sequence is that of Large ribosomal subunit protein eL21 (rpl21e) from Archaeoglobus fulgidus (strain ATCC 49558 / DSM 4304 / JCM 9628 / NBRC 100126 / VC-16).